The sequence spans 337 residues: MHSPPALGKVNMSQLQDNFGRRFHYLRLSITDACNFKCTYCLPDGYQSQGNSPFLSLSEIELLLGAFSQMGTQKVRITGGEPSLRKDFIDIIGLAANTPNIKTVATTTNGYRLAKNAQAWYDAGLRRINVSIDSLDPKMFYQITGENRFDQVMRGVDAALESGFERVKINAVLLKGLNSQDLPRFLHWIKHMPVDLRFIELMETGLGREYFKAHHLAGTQVKQQLIRDGWQLDKADILDGPAQNFSHSDYQGRIGLIMPYEKNFCVSCNRLRVSAKGQLHLCLFTENGVNLKDLLQDKSQTPELMARLQQQLGFKTAAHSLHQGITGVTTHLASIGG.

In terms of domain architecture, Radical SAM core spans 18-242; sequence NFGRRFHYLR…DKADILDGPA (225 aa). Position 27 (arginine 27) interacts with GTP. [4Fe-4S] cluster contacts are provided by cysteine 34 and cysteine 38. Tyrosine 40 is a binding site for S-adenosyl-L-methionine. A [4Fe-4S] cluster-binding site is contributed by cysteine 41. Arginine 76 serves as a coordination point for GTP. Glycine 80 is a binding site for S-adenosyl-L-methionine. Threonine 107 lines the GTP pocket. Serine 131 contacts S-adenosyl-L-methionine. Position 168 (lysine 168) interacts with GTP. Methionine 202 provides a ligand contact to S-adenosyl-L-methionine. [4Fe-4S] cluster is bound by residues cysteine 265 and cysteine 268. GTP is bound at residue 270–272; it reads RLR. Cysteine 282 contacts [4Fe-4S] cluster.

The protein belongs to the radical SAM superfamily. MoaA family. In terms of assembly, monomer and homodimer. [4Fe-4S] cluster serves as cofactor.

The catalysed reaction is GTP + AH2 + S-adenosyl-L-methionine = (8S)-3',8-cyclo-7,8-dihydroguanosine 5'-triphosphate + 5'-deoxyadenosine + L-methionine + A + H(+). It functions in the pathway cofactor biosynthesis; molybdopterin biosynthesis. Its function is as follows. Catalyzes the cyclization of GTP to (8S)-3',8-cyclo-7,8-dihydroguanosine 5'-triphosphate. In Shewanella denitrificans (strain OS217 / ATCC BAA-1090 / DSM 15013), this protein is GTP 3',8-cyclase.